Reading from the N-terminus, the 227-residue chain is PKHD-type hydroxylase Pden_4677 (227 aa).

One can recognise a Fe2OG dioxygenase domain in the interval 78–178 (HILPPMFNRY…RWASFFWAQS (101 aa)). Fe cation contacts are provided by H96, D98, and H159. R169 is a binding site for 2-oxoglutarate.

Fe(2+) is required as a cofactor. L-ascorbate serves as cofactor.

This chain is PKHD-type hydroxylase Pden_4677, found in Paracoccus denitrificans (strain Pd 1222).